The following is a 307-amino-acid chain: MAGGRDRGDLAARQLVFLLPEYLKDASRKSKSGLLFVKLVNPHSGEGATYLIDACLQKLFEIKVFKEKHHSWFINQSVQSGGLLHFATPMDPLFLLLHYLIKAGKEGKYQPLDQVVVDDKFPDCTLLLRFPELEKSLRHVTEEKEVNSKKYYKYSTEKTLKWLEKKVNQTVAALKANHVNVGARVQSSAYFSGVQVSRDKEEDYVRYAHGLISDYIPKELSDDLSKLLKLPEPPASLPNPPAKKLKLADEPVEAKEDYTKFNTKDLKNGKKNSKMTAAQKALAKVDKSGMKSIDAFFGAKNKKTGKI.

Alanine 2 carries the N-acetylalanine modification. An N6-acetyllysine modification is found at lysine 291. Phosphoserine is present on serine 292.

It belongs to the RNase H2 subunit B family. As to quaternary structure, the RNase H2 complex is a heterotrimer composed of the catalytic subunit RNASEH2A and the non-catalytic subunits RNASEH2B and RNASEH2C.

The protein resides in the nucleus. In terms of biological role, non catalytic subunit of RNase H2, an endonuclease that specifically degrades the RNA of RNA:DNA hybrids. Participates in DNA replication, possibly by mediating the removal of lagging-strand Okazaki fragment RNA primers during DNA replication. Mediates the excision of single ribonucleotides from DNA:RNA duplexes. The chain is Ribonuclease H2 subunit B (Rnaseh2b) from Rattus norvegicus (Rat).